The sequence spans 665 residues: Probable protein transport Sec1a (665 aa).

Residues 543-594 form a disordered region; sequence PSPSFRGIPSASTQTSPAHQPAQSMRSRRTGGTWARPRDSDDGYSSDSVLKH. 2 stretches are compositionally biased toward polar residues: residues 552–567 and 585–594; these read SASTQTSPAHQPAQSM and GYSSDSVLKH.

This sequence belongs to the STXBP/unc-18/SEC1 family.

Its function is as follows. Involved in the vesicle trafficking. Binds syntaxins. This is Probable protein transport Sec1a from Oryza sativa subsp. japonica (Rice).